The sequence spans 355 residues: 6-aminohexanoate-oligomer endohydrolase (355 aa).

The active-site Nucleophile is the Thr267.

The protein belongs to the peptidase S58 family. As to quaternary structure, heterotetramer composed of 4 alpha/beta heterodimers. Exists at the monomer/dimer/trimer equilibrium in aqueous solution. In terms of processing, expressed as an inactive precursor that is cleaved autocatalytically at Asn266/Thr267 to generate an active enzyme composed of an alpha subunit and a beta subunit.

It catalyses the reaction [N-(6-aminohexanoyl)]n + H2O = [N-(6-aminohexanoyl)]n-x + [N-(6-aminohexanoyl)]x.. Its pathway is xenobiotic degradation; nylon-6 oligomer degradation. Its function is as follows. Involved in the degradation of nylon-6 oligomers. Degrades cyclic and linear oligomers of 6-aminohexanoate (Ahx) with a degree of polymerization greater than three by an endo-type mode. Cannot use Ahx cyclic dimer or the Ahx linear dimer. The sequence is that of 6-aminohexanoate-oligomer endohydrolase from Paenarthrobacter ureafaciens.